A 304-amino-acid chain; its full sequence is MSSIKHLVYAVIRFLREQSQMDTYTSDEQESLEVAIQCLETVFKISPEDTHLAVSQPLTEMFTSSFCKNDVLPLSNSVPEDVGKADQLKDEGNNHMKEENYAAAVDCYTQAIELDPNNAVYYCNRAAAQSKLGHYTDAIKDCEKAIAIDSKYSKAYGRMGLALTALNKFEEAVTSYQKALDLDPENDSYKSNLKIAEQKLREVSSPTGTGLSFDMASLINNPAFISMAASLMQNPQVQQLMSGMMTNAIGGPAAGVGGLTDLSSLIQAGQQFAQQIQQQNPELIEQLRNHIRSRSFSSSAEEHS.

TPR repeat units lie at residues 15–49, 85–118, 119–152, and 153–186; these read LREQ…SPED, ADQL…DPNN, AVYY…DSKY, and SKAY…DPEN. At K131 the chain carries N6-acetyllysine. Phosphoserine is present on residues S293, S295, and S297.

This sequence belongs to the SGT family. As to quaternary structure, homooligomerize.

Co-chaperone that binds directly to HSC70 and HSP70 and regulates their ATPase activity. This Homo sapiens (Human) protein is Small glutamine-rich tetratricopeptide repeat-containing protein beta (SGTB).